We begin with the raw amino-acid sequence, 420 residues long: Probable acetate kinase (420 aa).

Residue Asn10 coordinates Mg(2+). Lys17 is a binding site for ATP. Arg97 is a binding site for substrate. Catalysis depends on Asp153, which acts as the Proton donor/acceptor. His213 to Gly217 lines the ATP pocket. Glu403 contacts Mg(2+).

This sequence belongs to the acetokinase family. Requires Mg(2+) as cofactor.

The enzyme catalyses acetate + ATP = acetyl phosphate + ADP. Its pathway is metabolic intermediate biosynthesis; acetyl-CoA biosynthesis; acetyl-CoA from acetate: step 1/2. The sequence is that of Probable acetate kinase from Emericella nidulans (strain FGSC A4 / ATCC 38163 / CBS 112.46 / NRRL 194 / M139) (Aspergillus nidulans).